Consider the following 362-residue polypeptide: NAD(P)H-quinone oxidoreductase subunit 1, chloroplastic (362 aa).

8 helical membrane-spanning segments follow: residues 29-49 (ILPILTLLLGITIEVLVIVWL), 103-123 (IAVISILLSFLVIPLGYHFVL), 128-148 (IGVFLWIAISSIAPIGLLMAG), 164-184 (AAQSISYEIPLTFCVLAISLL), 202-222 (FFGWNIWRQPIGFLVFLISSL), 247-267 (YSGIKYGLFYLVSYLNLLVSS), 303-323 (TIGIFITLTKAYLFLFISITI), and 335-355 (LLNLGWKFLLPISLGNLLLTT).

It belongs to the complex I subunit 1 family. In terms of assembly, NDH is composed of at least 16 different subunits, 5 of which are encoded in the nucleus.

It localises to the plastid. It is found in the chloroplast thylakoid membrane. It carries out the reaction a plastoquinone + NADH + (n+1) H(+)(in) = a plastoquinol + NAD(+) + n H(+)(out). The enzyme catalyses a plastoquinone + NADPH + (n+1) H(+)(in) = a plastoquinol + NADP(+) + n H(+)(out). Its function is as follows. NDH shuttles electrons from NAD(P)H:plastoquinone, via FMN and iron-sulfur (Fe-S) centers, to quinones in the photosynthetic chain and possibly in a chloroplast respiratory chain. The immediate electron acceptor for the enzyme in this species is believed to be plastoquinone. Couples the redox reaction to proton translocation, and thus conserves the redox energy in a proton gradient. This chain is NAD(P)H-quinone oxidoreductase subunit 1, chloroplastic, found in Agrostis stolonifera (Creeping bentgrass).